The following is a 295-amino-acid chain: MIKRVILFLATNLAVLLVLSISMRLLGIESLLNQQGTDLNLNALLIFAAIIGFSGSLISLAISKFTAKRLTGAQVIERPRSTTEVWLLETVQRHARMAGIGMPEVAIYASPEPNAFATGWNRNAALVAVSSGLLEQMNQNEVEAVLGHEISHVANGDMVTLALIQGVVNTFVIFLARIIGHLVDRVVFKTERGYGPAFFITTLIAQTVLAILASLIVLWFSRQREFRADAGGAQLAGKEKMIAALERLGRMAQEGLPEQLQAFGIAGGERSQGWKRLFMSHPPIEERIAALRAEH.

2 helical membrane passes run 5-25 (VILFLATNLAVLLVLSISMRL) and 43-63 (ALLIFAAIIGFSGSLISLAIS). H148 contacts Zn(2+). Residue E149 is part of the active site. Residue H152 participates in Zn(2+) binding. 2 consecutive transmembrane segments (helical) span residues 159-179 (VTLALIQGVVNTFVIFLARII) and 198-218 (FFITTLIAQTVLAILASLIVL). E225 serves as a coordination point for Zn(2+).

This sequence belongs to the peptidase M48B family. Zn(2+) is required as a cofactor.

It is found in the cell inner membrane. This is Protease HtpX from Nitrosococcus oceani (strain ATCC 19707 / BCRC 17464 / JCM 30415 / NCIMB 11848 / C-107).